Reading from the N-terminus, the 176-residue chain is Peptide deformylase 1 (176 aa).

Fe cation-binding residues include C99 and H141. E142 is a catalytic residue. H145 lines the Fe cation pocket.

The protein belongs to the polypeptide deformylase family. It depends on Fe(2+) as a cofactor.

The enzyme catalyses N-terminal N-formyl-L-methionyl-[peptide] + H2O = N-terminal L-methionyl-[peptide] + formate. In terms of biological role, removes the formyl group from the N-terminal Met of newly synthesized proteins. Requires at least a dipeptide for an efficient rate of reaction. N-terminal L-methionine is a prerequisite for activity but the enzyme has broad specificity at other positions. The sequence is that of Peptide deformylase 1 from Nitrosomonas europaea (strain ATCC 19718 / CIP 103999 / KCTC 2705 / NBRC 14298).